We begin with the raw amino-acid sequence, 155 residues long: RNA pyrophosphohydrolase (155 aa).

Positions Gly6 to Thr148 constitute a Nudix hydrolase domain. Residues Gly38–Gly59 carry the Nudix box motif.

It belongs to the Nudix hydrolase family. RppH subfamily. It depends on a divalent metal cation as a cofactor.

Functionally, accelerates the degradation of transcripts by removing pyrophosphate from the 5'-end of triphosphorylated RNA, leading to a more labile monophosphorylated state that can stimulate subsequent ribonuclease cleavage. This Francisella tularensis subsp. mediasiatica (strain FSC147) protein is RNA pyrophosphohydrolase.